A 143-amino-acid polypeptide reads, in one-letter code: Transcriptional regulator MraZ (143 aa).

SpoVT-AbrB domains follow at residues 5 to 47 (SHTP…PMAE) and 76 to 119 (AADD…DAQR).

This sequence belongs to the MraZ family. Forms oligomers.

It localises to the cytoplasm. The protein resides in the nucleoid. This chain is Transcriptional regulator MraZ, found in Frankia alni (strain DSM 45986 / CECT 9034 / ACN14a).